The sequence spans 86 residues: MKTVILVVIALMVIEVQGDGYLMVRAGIEKGCKIWCVINNDYCNRDCKLKGGTYGYCYFWKLACYCEGLPESSPDIWTYEKNTCSP.

The signal sequence occupies residues 1 to 18; it reads MKTVILVVIALMVIEVQG. The LCN-type CS-alpha/beta domain occupies 19-85; that stretch reads DGYLMVRAGI…IWTYEKNTCS (67 aa). 4 disulfide bridges follow: C32-C84, C36-C57, C43-C64, and C47-C66.

The protein belongs to the long (4 C-C) scorpion toxin superfamily. Sodium channel inhibitor family. Beta subfamily. Expressed by the venom gland.

The protein resides in the secreted. Binds voltage-independently at site-4 of sodium channels (Nav) and shift the voltage of activation toward more negative potentials thereby affecting sodium channel activation and promoting spontaneous and repetitive firing. This Lychas mucronatus (Chinese swimming scorpion) protein is Neurotoxin LmNaTx34.1.